The sequence spans 166 residues: Transcriptional repressor NrdR (166 aa).

A zinc finger lies at 3–34 (CIKCGNMEDKVIDSRPIKEGKSIRRRRECLRC). An ATP-cone domain is found at 49 to 139 (LFVKKRNGSI…VYCKFHDAKD (91 aa)).

It belongs to the NrdR family. Requires Zn(2+) as cofactor.

Negatively regulates transcription of bacterial ribonucleotide reductase nrd genes and operons by binding to NrdR-boxes. This Methylacidiphilum infernorum (isolate V4) (Methylokorus infernorum (strain V4)) protein is Transcriptional repressor NrdR.